We begin with the raw amino-acid sequence, 151 residues long: Transcription antitermination protein NusB (151 aa).

It belongs to the NusB family.

Involved in transcription antitermination. Required for transcription of ribosomal RNA (rRNA) genes. Binds specifically to the boxA antiterminator sequence of the ribosomal RNA (rrn) operons. This is Transcription antitermination protein NusB from Hamiltonella defensa subsp. Acyrthosiphon pisum (strain 5AT).